We begin with the raw amino-acid sequence, 727 residues long: Polyphosphate kinase (727 aa).

Asparagine 82 serves as a coordination point for ATP. Mg(2+) contacts are provided by arginine 412 and arginine 442. Histidine 472 (phosphohistidine intermediate) is an active-site residue. 3 residues coordinate ATP: tyrosine 505, arginine 601, and histidine 629.

The protein belongs to the polyphosphate kinase 1 (PPK1) family. It depends on Mg(2+) as a cofactor. Post-translationally, an intermediate of this reaction is the autophosphorylated ppk in which a phosphate is covalently linked to a histidine residue through a N-P bond.

The catalysed reaction is [phosphate](n) + ATP = [phosphate](n+1) + ADP. Its function is as follows. Catalyzes the reversible transfer of the terminal phosphate of ATP to form a long-chain polyphosphate (polyP). The protein is Polyphosphate kinase of Pseudomonas putida (strain ATCC 47054 / DSM 6125 / CFBP 8728 / NCIMB 11950 / KT2440).